An 89-amino-acid polypeptide reads, in one-letter code: Large ribosomal subunit protein uL24 (89 aa).

It belongs to the universal ribosomal protein uL24 family. In terms of assembly, part of the 50S ribosomal subunit.

Functionally, one of two assembly initiator proteins, it binds directly to the 5'-end of the 23S rRNA, where it nucleates assembly of the 50S subunit. One of the proteins that surrounds the polypeptide exit tunnel on the outside of the subunit. In Chlorobium chlorochromatii (strain CaD3), this protein is Large ribosomal subunit protein uL24.